A 144-amino-acid chain; its full sequence is uncharacterized protein (144 aa).

Residues 98 to 127 (PLADGATVDSQASENGEKEAQPTPPKEGLL) are disordered.

This is an uncharacterized protein from Aedes vexans (Inland floodwater mosquito).